A 345-amino-acid chain; its full sequence is Alanine racemase (345 aa).

Residue Lys33 is the Proton acceptor; specific for D-alanine of the active site. Position 33 is an N6-(pyridoxal phosphate)lysine (Lys33). Position 128 (Arg128) interacts with substrate. Tyr242 functions as the Proton acceptor; specific for L-alanine in the catalytic mechanism. Met291 lines the substrate pocket.

The protein belongs to the alanine racemase family. It depends on pyridoxal 5'-phosphate as a cofactor.

The catalysed reaction is L-alanine = D-alanine. The protein operates within amino-acid biosynthesis; D-alanine biosynthesis; D-alanine from L-alanine: step 1/1. Functionally, catalyzes the interconversion of L-alanine and D-alanine. May also act on other amino acids. The sequence is that of Alanine racemase (alr) from Ruegeria sp. (strain TM1040) (Silicibacter sp.).